Reading from the N-terminus, the 132-residue chain is Interferon-induced transmembrane protein 5 (132 aa).

The segment covering 1 to 11 has biased composition (basic and acidic residues); that stretch reads MDTAYPREDTR. Residues 1-21 form a disordered region; the sequence is MDTAYPREDTRAPTPSKAGAH. Topologically, residues 1 to 36 are extracellular; it reads MDTAYPREDTRAPTPSKAGAHTALTLGAPHPPPRDH. A helical membrane pass occupies residues 37–57; the sequence is LIWSVFSTLYLNLCCLGFLAL. 3 S-palmitoyl cysteine lipidation sites follow: cysteine 50, cysteine 51, and cysteine 84. The Cytoplasmic segment spans residues 58–86; it reads AYSIKARDQKVVGDLEAARRFGSKAKCYN. The chain crosses the membrane as a helical span at residues 87-107; that stretch reads ILAAMWTLVPPLLLLGLVVTG. Residues 108–132 lie on the Extracellular side of the membrane; it reads ALHLARLAKDSAAFFSTKFDDADYD.

The protein belongs to the CD225/Dispanin family. Interacts with FKBP11. In terms of processing, palmitoylated. In terms of tissue distribution, detected in osteoblasts and fibroblasts (at protein level). Detected in bone.

It is found in the cell membrane. Its function is as follows. Required for normal bone mineralization. The sequence is that of Interferon-induced transmembrane protein 5 (IFITM5) from Homo sapiens (Human).